Reading from the N-terminus, the 485-residue chain is Probable WRKY transcription factor 10 (485 aa).

Disordered regions lie at residues 43-62 (IFPQESLPRDHTDQSGQRSG) and 215-293 (ISIE…SKTQ). Residues 216–264 (SIEDSESEDGNKDDDDEDFQYEDEDEDQYDQDQDVDEDEEEEKDEDNVA) show a composition bias toward acidic residues. A DNA-binding region (WRKY) is located at residues 301 to 366 (SDEDNPNDGY…YDGIHNHPSP (66 aa)). Residues Cys332, Cys337, His361, and His363 each contribute to the Zn(2+) site. Residues 358-417 (DGIHNHPSPPARRSNSSSRNRSAGATIPQNQNDRTSRLGRAPPTPTPPTPPPSSYTPEEM) are disordered. A compositionally biased stretch (low complexity) spans 368 to 380 (ARRSNSSSRNRSA). Positions 399 to 411 (PPTPTPPTPPPSS) are enriched in pro residues.

The protein belongs to the WRKY group I family. As to quaternary structure, interacts with IKU1. Expressed in male gametophytes (pollen) and in the endosperm of fertilized ovules.

The protein localises to the nucleus. In terms of biological role, transcription factor. Interacts specifically with the W box (5'-(T)TGAC[CT]-3'), a frequently occurring elicitor-responsive cis-acting element. Modulates seed size by negatively regulating the cellularization of syncytial endosperm. The chain is Probable WRKY transcription factor 10 (WRKY10) from Arabidopsis thaliana (Mouse-ear cress).